A 469-amino-acid polypeptide reads, in one-letter code: L-seryl-tRNA(Sec) selenium transferase (469 aa).

An N6-(pyridoxal phosphate)lysine modification is found at K295.

The protein belongs to the SelA family. Requires pyridoxal 5'-phosphate as cofactor.

The protein localises to the cytoplasm. The catalysed reaction is L-seryl-tRNA(Sec) + selenophosphate + H(+) = L-selenocysteinyl-tRNA(Sec) + phosphate. It functions in the pathway aminoacyl-tRNA biosynthesis; selenocysteinyl-tRNA(Sec) biosynthesis; selenocysteinyl-tRNA(Sec) from L-seryl-tRNA(Sec) (bacterial route): step 1/1. Its function is as follows. Converts seryl-tRNA(Sec) to selenocysteinyl-tRNA(Sec) required for selenoprotein biosynthesis. This is L-seryl-tRNA(Sec) selenium transferase from Methylocella silvestris (strain DSM 15510 / CIP 108128 / LMG 27833 / NCIMB 13906 / BL2).